The following is a 118-amino-acid chain: uncharacterized protein (118 aa).

Residues 1-18 form the signal peptide; the sequence is MSKLIFLFVVATLATIKA. Asn-24 carries an N-linked (GlcNAc...) asparagine; by host glycan.

This is an uncharacterized protein from Magallana gigas (Pacific oyster).